The sequence spans 96 residues: Conotoxin Mr15.1 (96 aa).

The signal sequence occupies residues 1 to 20 (MSTLKMMLLILLLLLPLATF). Residues 21–57 (DSDGQAIPGGGIPSAVNSRVGRLLGGDEKSGRSLEKR) constitute a propeptide that is removed on maturation.

It belongs to the conotoxin N superfamily. Post-translationally, contains 4 disulfide bonds. As to expression, expressed by the venom duct.

Its subcellular location is the secreted. The chain is Conotoxin Mr15.1 from Conus marmoreus (Marble cone).